The chain runs to 354 residues: Probable mannitol dehydrogenase 1 (354 aa).

Zn(2+)-binding residues include cysteine 43, histidine 65, cysteine 96, cysteine 99, cysteine 102, cysteine 110, and cysteine 158.

This sequence belongs to the zinc-containing alcohol dehydrogenase family. Requires Zn(2+) as cofactor.

It catalyses the reaction D-mannitol + NAD(+) = D-mannose + NADH + H(+). In terms of biological role, oxidizes mannitol to mannose. Provides the initial step by which translocated mannitol is committed to central metabolism and, by regulating mannitol pool size, is important in regulating salt tolerance at the cellular level. This is Probable mannitol dehydrogenase 1 (CAD1) from Stylosanthes humilis (Townsville stylo).